The primary structure comprises 501 residues: Glycerol kinase (501 aa).

Thr-17 provides a ligand contact to ADP. 3 residues coordinate ATP: Thr-17, Thr-18, and Ser-19. Thr-17 is a sn-glycerol 3-phosphate binding site. ADP is bound at residue Arg-21. The sn-glycerol 3-phosphate site is built by Arg-87, Glu-88, Tyr-139, and Asp-243. Glycerol contacts are provided by Arg-87, Glu-88, Tyr-139, Asp-243, and Gln-244. The ADP site is built by Thr-265 and Gly-308. ATP-binding residues include Thr-265, Gly-308, Gln-312, and Gly-409. ADP is bound by residues Gly-409 and Asn-413.

Belongs to the FGGY kinase family.

The enzyme catalyses glycerol + ATP = sn-glycerol 3-phosphate + ADP + H(+). Its pathway is polyol metabolism; glycerol degradation via glycerol kinase pathway; sn-glycerol 3-phosphate from glycerol: step 1/1. With respect to regulation, inhibited by fructose 1,6-bisphosphate (FBP). Key enzyme in the regulation of glycerol uptake and metabolism. Catalyzes the phosphorylation of glycerol to yield sn-glycerol 3-phosphate. The polypeptide is Glycerol kinase (Pseudomonas savastanoi pv. phaseolicola (strain 1448A / Race 6) (Pseudomonas syringae pv. phaseolicola (strain 1448A / Race 6))).